We begin with the raw amino-acid sequence, 692 residues long: MLSHNALRAFDCSKVIISRRCLTSSTSIYQQSSVHLQETDDGHSGNREKHVSPFERVQNLAADLKNELKAPDSDINEVFNDFKDKIESLKQKLRNPSPMERSHLLANFSSDLLQELSYRSKNMTLDPYQVLNTLCQYKLARSQHFTIVLKYLLYNQSPQDVIALWVKYLETISENPVILLQNSSSRAHMQNIAITTIAYLSLPENTVDINILYKILQIDRKMGQVLPFNMIRRMLSTEFSSLERRDVIIKNLNTLYYQYTVQDSDHFLSQIENAPRWIDLRDLYGQYNKLEGEKNVEIISKFMDKFIDLDKPDQVVTIYNQYSKVFPNSTSLKDCLLRAVSHLRAKSSKEKLDRILAVWNSVIKPGDNIKNTSYATLVNALTDSGNFNHLKEFWEEELPKKFKKDPIVKEAFLLALCQTSPLKYDQVKGELAETVKTKKLFNKVLLLMLDDEKVSEEQFNTFYYNHYPSDGVLPPTLDTLSIKMYANYKFQAEDTRPQFDLLQSVSINPTDYEKVEKITKAFISVCPTVEPIRQLYKQLGTHLNARNYADFISAEFNKPDGTVAEAKNLFSDFLSYQKTRKRNVDNTPLNALLLGFCDKLYKSKHSEYVPYIEKYYNLAKDSSIRVSNLAVSKILFNLATFARNTQQLSDKEVAFINQFMRDLGTNEGFRPNPKDIQILKECDGITVPEKLT.

A mitochondrion-targeting transit peptide spans 1–30 (MLSHNALRAFDCSKVIISRRCLTSSTSIYQ).

The protein resides in the mitochondrion. In terms of biological role, may be involved in the control of meiotic sister-chromatid recombination. The chain is Meiotic sister-chromatid recombination protein 6, mitochondrial (MSC6) from Saccharomyces cerevisiae (strain ATCC 204508 / S288c) (Baker's yeast).